We begin with the raw amino-acid sequence, 1466 residues long: ABC transporter C family member 6 (1466 aa).

10 helical membrane passes run 16 to 36 (SVLS…SWLF), 63 to 83 (LVLI…LLSC), 91 to 111 (WPFL…VYLF), 128 to 148 (VWWV…FVLY), 158 to 178 (FVIS…SCLW), 286 to 306 (IVLS…APYL), 322 to 339 (NQGY…LVEC), 400 to 420 (WFMH…WILY), 425 to 445 (LGSI…YPFA), and 512 to 532 (SVLW…CLLL). The region spanning 286 to 567 (IVLSALLAFV…LPETISMIVQ (282 aa)) is the ABC transmembrane type-1 1 domain. In terms of domain architecture, ABC transporter 1 spans 601–824 (VEISNGTFSW…GTDFMELVGA (224 aa)). Residue 636–643 (GTVGSGKS) coordinates ATP. The disordered stretch occupies residues 840 to 876 (ASEKSTTDKENEVLHHKEKQENGSDNKPSGQLVQEEE). A compositionally biased stretch (basic and acidic residues) spans 844 to 863 (STTDKENEVLHHKEKQENGS). Transmembrane regions (helical) follow at residues 890-910 (YMAL…QVLF), 937-957 (GFTL…CILI), and 1026-1046 (ILGI…VFIP). One can recognise an ABC transmembrane type-1 2 domain in the interval 900 to 1182 (IPLILVVQVL…LIWTLCDLEN (283 aa)). Positions 1219-1453 (ITICNLQVRY…RSSLFSKLVA (235 aa)) constitute an ABC transporter 2 domain. Residue 1253–1260 (GRTGCGKS) coordinates ATP.

This sequence belongs to the ABC transporter superfamily. ABCC family. Conjugate transporter (TC 3.A.1.208) subfamily. In terms of tissue distribution, ubiquitous.

It localises to the membrane. The catalysed reaction is ATP + H2O + xenobioticSide 1 = ADP + phosphate + xenobioticSide 2.. Pump for glutathione S-conjugates. This Arabidopsis thaliana (Mouse-ear cress) protein is ABC transporter C family member 6 (ABCC6).